Consider the following 562-residue polypeptide: Proton channel OTOP2 (562 aa).

Residues 1–20 (MSEELAQGPKESPPAPRAGP) form a disordered region. The next 12 membrane-spanning stretches (helical) occupy residues 30–50 (LLSV…ISGG), 62–82 (VFAL…FYLL), 100–120 (PIWL…MDVF), 137–157 (ILHP…LWVS), 169–189 (TWCG…AAVV), 241–261 (FYLY…LYVM), 289–309 (FFAG…VFII), 324–344 (ALVI…LVSL), 371–391 (LLMG…VAVV), 402–422 (LNLT…MFII), 495–515 (DISL…AFGA), and 527–547 (FYGY…GIFY).

The protein belongs to the otopetrin family.

It is found in the cell membrane. The catalysed reaction is H(+)(in) = H(+)(out). Its activity is regulated as follows. Actives at neutral and alkaline extracellular pH, acid extracellular pH appears to inhibit the channel. Insensitive to activation by Zn(2+). Proton-selective ion channel open at neutral pH. Actives at neutral and alkaline extracellular pH, likely participates in some alkali-related physiological activities. The polypeptide is Proton channel OTOP2 (Homo sapiens (Human)).